The chain runs to 257 residues: Probable amino-acid ABC transporter ATP-binding protein y4tH (257 aa).

The 246-residue stretch at isoleucine 6–leucine 251 folds into the ABC transporter domain. Glycine 38–serine 45 contacts ATP.

The protein belongs to the ABC transporter superfamily.

The protein localises to the cell inner membrane. Its function is as follows. Probably part of a binding-protein-dependent transport system y4tEFGH for an amino acid. Probably responsible for energy coupling to the transport system. The protein is Probable amino-acid ABC transporter ATP-binding protein y4tH of Sinorhizobium fredii (strain NBRC 101917 / NGR234).